We begin with the raw amino-acid sequence, 337 residues long: Quinolinate synthase (337 aa).

Iminosuccinate is bound by residues His-40 and Ser-57. A [4Fe-4S] cluster-binding site is contributed by Cys-102. Iminosuccinate is bound by residues 128–130 (YVN) and Ser-145. Residue Cys-189 participates in [4Fe-4S] cluster binding. Residues 215–217 (HPE) and Thr-243 each bind iminosuccinate. Residue Cys-288 participates in [4Fe-4S] cluster binding.

This sequence belongs to the quinolinate synthase family. Type 2 subfamily. [4Fe-4S] cluster serves as cofactor.

The protein localises to the cytoplasm. It carries out the reaction iminosuccinate + dihydroxyacetone phosphate = quinolinate + phosphate + 2 H2O + H(+). It functions in the pathway cofactor biosynthesis; NAD(+) biosynthesis; quinolinate from iminoaspartate: step 1/1. Catalyzes the condensation of iminoaspartate with dihydroxyacetone phosphate to form quinolinate. The sequence is that of Quinolinate synthase from Mycobacterium sp. (strain JLS).